The primary structure comprises 335 residues: DNA-directed RNA polymerase subunit alpha (335 aa).

Residues 1 to 231 (MVREKITVST…DLLIPFLHTK (231 aa)) form an alpha N-terminal domain (alpha-NTD) region. Positions 263–335 (KKMALKSIFI…FVIDLPKNKF (73 aa)) are alpha C-terminal domain (alpha-CTD).

Belongs to the RNA polymerase alpha chain family. As to quaternary structure, in plastids the minimal PEP RNA polymerase catalytic core is composed of four subunits: alpha, beta, beta', and beta''. When a (nuclear-encoded) sigma factor is associated with the core the holoenzyme is formed, which can initiate transcription.

It is found in the plastid. It localises to the chloroplast. The catalysed reaction is RNA(n) + a ribonucleoside 5'-triphosphate = RNA(n+1) + diphosphate. In terms of biological role, DNA-dependent RNA polymerase catalyzes the transcription of DNA into RNA using the four ribonucleoside triphosphates as substrates. The sequence is that of DNA-directed RNA polymerase subunit alpha from Lactuca sativa (Garden lettuce).